Here is a 904-residue protein sequence, read N- to C-terminus: Protein translocase subunit SecA (904 aa).

ATP is bound by residues glutamine 89, 107-111 (GEGKT), and aspartate 496. Positions 870–904 (GGFQELSSGTPSPTVTVTTSSGGGTERKTSRRRKR) are disordered. The segment covering 876-889 (SSGTPSPTVTVTTS) has biased composition (low complexity).

Belongs to the SecA family. Monomer and homodimer. Part of the essential Sec protein translocation apparatus which comprises SecA, SecYEG and auxiliary proteins SecDF. Other proteins may also be involved.

It is found in the cell inner membrane. Its subcellular location is the cytoplasm. It catalyses the reaction ATP + H2O + cellular proteinSide 1 = ADP + phosphate + cellular proteinSide 2.. Part of the Sec protein translocase complex. Interacts with the SecYEG preprotein conducting channel. Has a central role in coupling the hydrolysis of ATP to the transfer of proteins into and across the cell membrane, serving as an ATP-driven molecular motor driving the stepwise translocation of polypeptide chains across the membrane. The polypeptide is Protein translocase subunit SecA (Leptospira borgpetersenii serovar Hardjo-bovis (strain L550)).